The sequence spans 155 residues: Ribosome maturation factor RimP (155 aa).

The protein belongs to the RimP family.

The protein resides in the cytoplasm. Required for maturation of 30S ribosomal subunits. This chain is Ribosome maturation factor RimP, found in Prochlorococcus marinus (strain MIT 9312).